Here is an 82-residue protein sequence, read N- to C-terminus: Exodeoxyribonuclease 7 small subunit (82 aa).

It belongs to the XseB family. As to quaternary structure, heterooligomer composed of large and small subunits.

The protein localises to the cytoplasm. The enzyme catalyses Exonucleolytic cleavage in either 5'- to 3'- or 3'- to 5'-direction to yield nucleoside 5'-phosphates.. Functionally, bidirectionally degrades single-stranded DNA into large acid-insoluble oligonucleotides, which are then degraded further into small acid-soluble oligonucleotides. The chain is Exodeoxyribonuclease 7 small subunit from Pectobacterium atrosepticum (strain SCRI 1043 / ATCC BAA-672) (Erwinia carotovora subsp. atroseptica).